The sequence spans 159 residues: Protein-export protein SecB (159 aa).

The protein belongs to the SecB family. Homotetramer, a dimer of dimers. One homotetramer interacts with 1 SecA dimer.

Its subcellular location is the cytoplasm. One of the proteins required for the normal export of preproteins out of the cell cytoplasm. It is a molecular chaperone that binds to a subset of precursor proteins, maintaining them in a translocation-competent state. It also specifically binds to its receptor SecA. The chain is Protein-export protein SecB from Burkholderia mallei (strain NCTC 10229).